The chain runs to 291 residues: Beta-lactamase CTX-M-4 (291 aa).

Positions 1–28 are cleaved as a signal peptide; the sequence is MMTQSIRRSMLTVMATLPLLFSSATLHA. The Acyl-ester intermediate role is filled by Ser73. 237 to 239 is a substrate binding site; the sequence is KTG.

It belongs to the class-A beta-lactamase family.

It carries out the reaction a beta-lactam + H2O = a substituted beta-amino acid. In terms of biological role, has cefotaxime-hydrolyzing activity. This Salmonella typhimurium protein is Beta-lactamase CTX-M-4 (bla).